A 469-amino-acid chain; its full sequence is Glutamate--tRNA ligase (469 aa).

Positions P9–G19 match the 'HIGH' region motif. Residues C98, C100, C125, and D127 each coordinate Zn(2+). The 'KMSKS' region signature appears at K236–R240. Position 239 (K239) interacts with ATP.

This sequence belongs to the class-I aminoacyl-tRNA synthetase family. Glutamate--tRNA ligase type 1 subfamily. Monomer. Zn(2+) is required as a cofactor.

It is found in the cytoplasm. The enzyme catalyses tRNA(Glu) + L-glutamate + ATP = L-glutamyl-tRNA(Glu) + AMP + diphosphate. Its function is as follows. Catalyzes the attachment of glutamate to tRNA(Glu) in a two-step reaction: glutamate is first activated by ATP to form Glu-AMP and then transferred to the acceptor end of tRNA(Glu). The polypeptide is Glutamate--tRNA ligase (Shewanella loihica (strain ATCC BAA-1088 / PV-4)).